Here is a 439-residue protein sequence, read N- to C-terminus: Secreted aspartic protease FUS4 (439 aa).

The N-terminal stretch at 1–22 (MLTIATLHVALQVFGAFSPSHA) is a signal peptide. The 386-residue stretch at 49–434 (YLFNVTVGSP…NFEDRSFGLA (386 aa)) folds into the Peptidase A1 domain. N-linked (GlcNAc...) asparagine glycosylation is found at asparagine 52 and asparagine 61. The active site involves aspartate 67. N-linked (GlcNAc...) asparagine glycosylation is found at asparagine 101, asparagine 107, and asparagine 123. Aspartate 296 is a catalytic residue. Cysteines 352 and 390 form a disulfide.

It belongs to the peptidase A1 family.

It localises to the secreted. Its function is as follows. Secreted aspartic protease; part of the gene cluster that mediates the biosynthesis of the mycotoxin fusarin C. Within the cluster, FUS1, FUS2, FUS8 and FUS9 are sufficient for fusarin production. The other FUS cluster members are not essential for fusarin C biosynthesis. The protein is Secreted aspartic protease FUS4 of Gibberella moniliformis (strain M3125 / FGSC 7600) (Maize ear and stalk rot fungus).